The primary structure comprises 492 residues: Solute carrier family 2, facilitated glucose transporter member 1 (492 aa).

Met1 carries the post-translational modification N-acetylmethionine. The Cytoplasmic segment spans residues 1-11 (MDPSSKKVTGR). A helical transmembrane segment spans residues 12–33 (LMLAVGGAVLGSLQFGYNTGVI). The Extracellular portion of the chain corresponds to 34 to 66 (NAPQKVIEEFYNQTWNHRYGEPIPSTTLTTLWS). A glycan (N-linked (GlcNAc...) asparagine) is linked at Asn45. Residues 67 to 87 (LSVAIFSVGGMIGSFSVGLFV) form a helical membrane-spanning segment. Topologically, residues 88 to 90 (NRF) are cytoplasmic. The chain crosses the membrane as a helical span at residues 91–112 (GRRNSMLMMNLLAFVAAVLMGF). At 113–120 (SKLGKSFE) the chain is on the extracellular side. The chain crosses the membrane as a helical span at residues 121 to 144 (MLILGRFIIGVYCGLTTGFVPMYV). The Cytoplasmic segment spans residues 145 to 155 (GEVSPTALRGA). A helical transmembrane segment spans residues 156–176 (LGTLHQLGIVVGILIAQVFGL). Gln161 is a binding site for D-glucose. Topologically, residues 177 to 185 (DSIMGNADL) are extracellular. A helical membrane pass occupies residues 186–206 (WPLLLSVIFIPALLQCILLPF). The Cytoplasmic portion of the chain corresponds to 207–271 (CPESPRFLLI…LFRSPAYRQP (65 aa)). A Phosphoserine modification is found at Ser226. A helical membrane pass occupies residues 272–293 (ILIAVVLQLSQQLSGINAVFYY). D-glucose-binding positions include 282 to 283 (QQ) and Asn288. Over 294–306 (STSIFEKAGVQQP) the chain is Extracellular. A helical membrane pass occupies residues 307 to 328 (VYATIGSGIVNTAFTVVSLFVV). A D-glucose-binding site is contributed by Asn317. Over 329 to 334 (ERAGRR) the chain is Cytoplasmic. The chain crosses the membrane as a helical span at residues 335-355 (TLHLIGLAGMAGCAVLMTIAL). Over 356 to 365 (ALLERLPWMS) the chain is Extracellular. Residues 366 to 388 (YLSIVAIFGFVAFFEVGPGPIPW) traverse the membrane as a helical segment. Residues Glu380 and Trp388 each contribute to the D-glucose site. At 389–401 (FIVAELFSQGPRP) the chain is on the cytoplasmic side. Residues 402 to 422 (AAIAVAGFSNWTSNFIVGMCF) form a helical membrane-spanning segment. Residues 423 to 429 (QYVEQLC) lie on the Extracellular side of the membrane. A helical membrane pass occupies residues 430-450 (GPYVFIIFTVLLVLFFIFTYF). Residues 451 to 492 (KVPETKGRTFDEIASGFRQGGASQSDKTPEELFHPLGADSQV) are Cytoplasmic-facing. Ser465 carries the phosphoserine modification. Residues 468 to 492 (RQGGASQSDKTPEELFHPLGADSQV) form a disordered region. Thr478 is modified (phosphothreonine). Residue Ser490 is modified to Phosphoserine.

It belongs to the major facilitator superfamily. Sugar transporter (TC 2.A.1.1) family. Glucose transporter subfamily. In terms of assembly, found in a complex with ADD2, DMTN and SLC2A1. Interacts (via C-terminus cytoplasmic region) with DMTN isoform 2. Interacts with SNX27; the interaction is required when endocytosed to prevent degradation in lysosomes and promote recycling to the plasma membrane. Interacts with GIPC (via PDZ domain). Interacts with STOM. Interacts with SGTA (via Gln-rich region). Interacts with isoform 1 of BSG. Interacts with SMIM43; the interaction may promote SLC2A1-mediated glucose transport to meet the energy needs of mesendoderm differentiation. Post-translationally, phosphorylation at Ser-226 by PKC promotes glucose uptake by increasing cell membrane localization. Retina (at protein level).

It localises to the cell membrane. The protein localises to the photoreceptor inner segment. The catalysed reaction is D-glucose(out) = D-glucose(in). Its activity is regulated as follows. The uptake of glucose is inhibited by cytochalasin B. Glucose uptake is increased in response to phorbol ester 12-O-tetradecanoylphorbol-13-acetate (TPA) treatment: TPA-induced glucose uptake requires phosphorylation at Ser-226. Functionally, facilitative glucose transporter, which is responsible for constitutive or basal glucose uptake. Has a very broad substrate specificity; can transport a wide range of aldoses including both pentoses and hexoses. Most important energy carrier of the brain: present at the blood-brain barrier and assures the energy-independent, facilitative transport of glucose into the brain. In association with BSG and NXNL1, promotes retinal cone survival by increasing glucose uptake into photoreceptors. Required for mesendoderm differentiation. The sequence is that of Solute carrier family 2, facilitated glucose transporter member 1 from Mus musculus (Mouse).